A 966-amino-acid chain; its full sequence is Probable LIM domain-containing serine/threonine-protein kinase DDB_G0286997 (966 aa).

LIM zinc-binding domains follow at residues 3 to 62 (SRCG…LNAP) and 63 to 120 (KCFK…KPPP). 2 disordered regions span residues 208-291 (YSLS…PTED) and 331-588 (PLNQ…EQQV). Over residues 211–231 (SSPSSSSSSSSSSSSSSSSPP) the composition is skewed to low complexity. Residues 232 to 269 (NTFNKSSDFLRNPLNNNVKSSSSSIGGNFVNKSQQQQQ) show a composition bias toward polar residues. Low complexity-rich tracts occupy residues 270–284 (PIDS…ISPS) and 331–350 (PLNQ…SPNL). The span at 374 to 389 (TTTFSNPLLKTKNQSF) shows a compositional bias: polar residues. Pro residues predominate over residues 419 to 430 (PLPPPPITPIPS). The span at 431 to 449 (PSSSSIIINNQQQQQQESQ) shows a compositional bias: low complexity. Residues 490–511 (KPIVLPPPPLDMEQLPLPPPPL) show a composition bias toward pro residues. Over residues 513 to 526 (SSQINQSLKSTQHN) the composition is skewed to polar residues. Low complexity predominate over residues 543–560 (IQKQSIPTRKPQLPQSSN). A compositionally biased stretch (pro residues) spans 561–570 (PSPPSPPSPQ). The 258-residue stretch at 702–959 (VIFGDVIAAG…DTLKKISESL (258 aa)) folds into the Protein kinase domain. Residues 708–716 (IAAGASGKV) and Lys729 each bind ATP. Asp825 serves as the catalytic Proton acceptor.

It belongs to the protein kinase superfamily. TKL Ser/Thr protein kinase family.

The catalysed reaction is L-seryl-[protein] + ATP = O-phospho-L-seryl-[protein] + ADP + H(+). The enzyme catalyses L-threonyl-[protein] + ATP = O-phospho-L-threonyl-[protein] + ADP + H(+). The polypeptide is Probable LIM domain-containing serine/threonine-protein kinase DDB_G0286997 (Dictyostelium discoideum (Social amoeba)).